We begin with the raw amino-acid sequence, 355 residues long: MPVLHNRVSNEELKARMLAETEPRTTVSFYKYFTIDDPKAFRDRLYIQLEQYKVFGRIYIAAEGINAQISVPNNQFDAFKTGLFSAHPALDQIRLNIALEDDGKSFWVLRMKVRERIVADGIDDPTFNPANVGQYLKADRVNAMADDPDTVFVDMRNHYEYEVGHFQNALEVPSDTFREQLPMAVDMLDDIRDKNIVMYCTGGIRCEKASAYMLHHGFKNVYHVEGGIIEYARQAKAQGLPLKFIGKNFVFDERMGERISDDVIAHCHQCGASCDSHTNCRNEGCHLLFIQCPSCAAKYEGCCSTQCQDEMKLPLEEQRAIRSGRENGMKIFNKSKGLLQSTLHIPAPAAKDNAE.

The 95-residue stretch at 146-240 folds into the Rhodanese domain; that stretch reads DDPDTVFVDM…YARQAKAQGL (95 aa). C200 (cysteine persulfide intermediate) is an active-site residue.

The protein belongs to the TrhO family.

It catalyses the reaction uridine(34) in tRNA + AH2 + O2 = 5-hydroxyuridine(34) in tRNA + A + H2O. Functionally, catalyzes oxygen-dependent 5-hydroxyuridine (ho5U) modification at position 34 in tRNAs. The chain is tRNA uridine(34) hydroxylase from Pectobacterium atrosepticum (strain SCRI 1043 / ATCC BAA-672) (Erwinia carotovora subsp. atroseptica).